A 533-amino-acid polypeptide reads, in one-letter code: Zinc finger protein 26 (533 aa).

The 72-residue stretch at 14 to 85 (LSFKDISMEF…NAKISRQSCP (72 aa)) folds into the KRAB domain. 13 consecutive C2H2-type zinc fingers follow at residues 174 to 196 (CVCSECGKAFRCKSQLIVHLRIH), 202 to 224 (YECSKCERAFSAKSNLNAHQRVH), 230 to 252 (YSCSECEKVFSFRSQLIVHQEIH), 258 to 280 (YGCSECGKAYSWKSQLLLHQRSH), 286 to 308 (YECSECGKAFSLKSPFVVHQRTH), 314 to 336 (HKCSECGKAFRSKSYLLVHIRMH), 342 to 364 (YQCSDCGKAFNMKTQLIVHQGVH), 370 to 392 (YQCGECGKAFGRKEQLTAHLRAH), 398 to 420 (YGCSECGKAFSSKSYLVIHRRTH), 426 to 448 (YECSLCERAFCGKSQLIIHQRTH), 454 to 476 (YECNECEKAYPRKASLQIHQKTH), 482 to 504 (FKCSECGKAFTQKSSLSEHQRVH), and 510 to 532 (WKCSECGKSFCWNSGLRIHRKTH).

It belongs to the krueppel C2H2-type zinc-finger protein family.

It is found in the nucleus. May be involved in transcriptional regulation. This chain is Zinc finger protein 26 (ZNF26), found in Homo sapiens (Human).